The chain runs to 487 residues: NADH-quinone oxidoreductase subunit N (487 aa).

The next 13 membrane-spanning stretches (helical) occupy residues 9–29, 38–58, 73–93, 108–128, 161–181, 208–228, 240–260, 277–297, 306–326, 328–348, 374–394, 408–430, and 452–472; these read PVLP…LGVF, VSVL…SLGG, FAGF…AMSL, VLVL…DFIA, FVLG…LYGF, IIAG…AVPF, PTPV…CLLV, VVTF…VVQT, SSIG…TLGI, GVLI…AVIL, AFVM…AGFW, LYTL…LRIV, and LVMA…APLV.

This sequence belongs to the complex I subunit 2 family. NDH-1 is composed of 14 different subunits. Subunits NuoA, H, J, K, L, M, N constitute the membrane sector of the complex.

The protein localises to the cell inner membrane. It catalyses the reaction a quinone + NADH + 5 H(+)(in) = a quinol + NAD(+) + 4 H(+)(out). In terms of biological role, NDH-1 shuttles electrons from NADH, via FMN and iron-sulfur (Fe-S) centers, to quinones in the respiratory chain. The immediate electron acceptor for the enzyme in this species is believed to be ubiquinone. Couples the redox reaction to proton translocation (for every two electrons transferred, four hydrogen ions are translocated across the cytoplasmic membrane), and thus conserves the redox energy in a proton gradient. The sequence is that of NADH-quinone oxidoreductase subunit N from Paramagnetospirillum magneticum (strain ATCC 700264 / AMB-1) (Magnetospirillum magneticum).